The primary structure comprises 237 residues: Uracil-DNA glycosylase (237 aa).

Catalysis depends on Asp77, which acts as the Proton acceptor.

It belongs to the uracil-DNA glycosylase (UDG) superfamily. UNG family.

It is found in the cytoplasm. The enzyme catalyses Hydrolyzes single-stranded DNA or mismatched double-stranded DNA and polynucleotides, releasing free uracil.. Excises uracil residues from the DNA which can arise as a result of misincorporation of dUMP residues by DNA polymerase or due to deamination of cytosine. In Acinetobacter baumannii (strain SDF), this protein is Uracil-DNA glycosylase.